The primary structure comprises 123 residues: Small ribosomal subunit protein eS8 (123 aa).

The interval 1–38 (MKDQGRSPRKRTGGRRRPNHKKKKHELGKDTVETQVGE) is disordered. The segment covering 7 to 26 (SPRKRTGGRRRPNHKKKKHE) has biased composition (basic residues).

As to quaternary structure, part of the 30S ribosomal subunit.

The protein is Small ribosomal subunit protein eS8 (rps8e) of Haloarcula marismortui (strain ATCC 43049 / DSM 3752 / JCM 8966 / VKM B-1809) (Halobacterium marismortui).